The sequence spans 125 residues: Small ribosomal subunit protein bS6 (125 aa).

The tract at residues 99–125 (ASPMVKAREERKPLTEVENNDFEDAEE) is disordered. Over residues 104 to 113 (KAREERKPLT) the composition is skewed to basic and acidic residues. A compositionally biased stretch (acidic residues) spans 116–125 (ENNDFEDAEE).

This sequence belongs to the bacterial ribosomal protein bS6 family.

Its function is as follows. Binds together with bS18 to 16S ribosomal RNA. The sequence is that of Small ribosomal subunit protein bS6 from Histophilus somni (strain 2336) (Haemophilus somnus).